The sequence spans 103 residues: Large ribosomal subunit protein uL24 (103 aa).

It belongs to the universal ribosomal protein uL24 family. As to quaternary structure, part of the 50S ribosomal subunit.

One of two assembly initiator proteins, it binds directly to the 5'-end of the 23S rRNA, where it nucleates assembly of the 50S subunit. Functionally, one of the proteins that surrounds the polypeptide exit tunnel on the outside of the subunit. The sequence is that of Large ribosomal subunit protein uL24 from Mannheimia succiniciproducens (strain KCTC 0769BP / MBEL55E).